The chain runs to 462 residues: Chromosomal replication initiator protein DnaA (462 aa).

The domain I, interacts with DnaA modulators stretch occupies residues 1–86 (MSLSLWQQCL…EVGNKPVSQN (86 aa)). Residues 86-125 (NDSPPQRVVTHTPVAPAPQNTSVRPSWDNTAVQPELSYRS) are domain II. The segment at 126–342 (NVNPKHTFDN…GALNRVIANA (217 aa)) is domain III, AAA+ region. ATP is bound by residues Gly170, Gly172, Lys173, and Thr174. A domain IV, binds dsDNA region spans residues 343-462 (NFTGRAITID…FSNLIRTLSS (120 aa)).

The protein belongs to the DnaA family. In terms of assembly, oligomerizes as a right-handed, spiral filament on DNA at oriC.

It localises to the cytoplasm. In terms of biological role, plays an essential role in the initiation and regulation of chromosomal replication. ATP-DnaA binds to the origin of replication (oriC) to initiate formation of the DNA replication initiation complex once per cell cycle. Binds the DnaA box (a 9 base pair repeat at the origin) and separates the double-stranded (ds)DNA. Forms a right-handed helical filament on oriC DNA; dsDNA binds to the exterior of the filament while single-stranded (ss)DNA is stabiized in the filament's interior. The ATP-DnaA-oriC complex binds and stabilizes one strand of the AT-rich DNA unwinding element (DUE), permitting loading of DNA polymerase. After initiation quickly degrades to an ADP-DnaA complex that is not apt for DNA replication. Binds acidic phospholipids. The chain is Chromosomal replication initiator protein DnaA from Photorhabdus laumondii subsp. laumondii (strain DSM 15139 / CIP 105565 / TT01) (Photorhabdus luminescens subsp. laumondii).